The primary structure comprises 320 residues: Acetyl-coenzyme A carboxylase carboxyl transferase subunit alpha (320 aa).

The 254-residue stretch at 42-295 (IEDKAKAALH…GDAIAQAFSD (254 aa)) folds into the CoA carboxyltransferase C-terminal domain.

It belongs to the AccA family. As to quaternary structure, acetyl-CoA carboxylase is a heterohexamer composed of biotin carboxyl carrier protein (AccB), biotin carboxylase (AccC) and two subunits each of ACCase subunit alpha (AccA) and ACCase subunit beta (AccD).

The protein resides in the cytoplasm. It catalyses the reaction N(6)-carboxybiotinyl-L-lysyl-[protein] + acetyl-CoA = N(6)-biotinyl-L-lysyl-[protein] + malonyl-CoA. It functions in the pathway lipid metabolism; malonyl-CoA biosynthesis; malonyl-CoA from acetyl-CoA: step 1/1. Its function is as follows. Component of the acetyl coenzyme A carboxylase (ACC) complex. First, biotin carboxylase catalyzes the carboxylation of biotin on its carrier protein (BCCP) and then the CO(2) group is transferred by the carboxyltransferase to acetyl-CoA to form malonyl-CoA. The sequence is that of Acetyl-coenzyme A carboxylase carboxyl transferase subunit alpha from Afipia carboxidovorans (strain ATCC 49405 / DSM 1227 / KCTC 32145 / OM5) (Oligotropha carboxidovorans).